A 101-amino-acid polypeptide reads, in one-letter code: MELKKQAQKGTIISEKFIEPENYRVILLNDDFTPMDFVVAVLISIFNKSQEEAETLMFKVHKTGQASVGIYVYDIATTKCFQVLTAAKNNNFPLQCKVEKV.

It belongs to the ClpS family. As to quaternary structure, binds to the N-terminal domain of the chaperone ClpA.

Involved in the modulation of the specificity of the ClpAP-mediated ATP-dependent protein degradation. The polypeptide is ATP-dependent Clp protease adapter protein ClpS (Treponema denticola (strain ATCC 35405 / DSM 14222 / CIP 103919 / JCM 8153 / KCTC 15104)).